We begin with the raw amino-acid sequence, 262 residues long: Flap endonuclease Xni (262 aa).

A Mg(2+)-binding site is contributed by aspartate 105. Residues 162 to 257 (ERSQFLDLMA…FRVIDSPPEK (96 aa)) enclose the 5'-3' exonuclease domain. Residues leucine 172, alanine 173, proline 181, isoleucine 183, and isoleucine 186 each contribute to the K(+) site. Residues 185-190 (GIGPKS) form an interaction with DNA region.

The protein belongs to the Xni family. Mg(2+) is required as a cofactor. Requires K(+) as cofactor.

In terms of biological role, has flap endonuclease activity. During DNA replication, flap endonucleases cleave the 5'-overhanging flap structure that is generated by displacement synthesis when DNA polymerase encounters the 5'-end of a downstream Okazaki fragment. The polypeptide is Flap endonuclease Xni (Shewanella baltica (strain OS155 / ATCC BAA-1091)).